Reading from the N-terminus, the 92-residue chain is Small ribosomal subunit protein uS17 (92 aa).

This sequence belongs to the universal ribosomal protein uS17 family. Part of the 30S ribosomal subunit.

One of the primary rRNA binding proteins, it binds specifically to the 5'-end of 16S ribosomal RNA. The sequence is that of Small ribosomal subunit protein uS17 from Corynebacterium urealyticum (strain ATCC 43042 / DSM 7109).